Reading from the N-terminus, the 130-residue chain is Glycine cleavage system H protein (130 aa).

One can recognise a Lipoyl-binding domain in the interval 25-106 (MALIGISDFA…PFDSWMIKVK (82 aa)). K66 is modified (N6-lipoyllysine).

It belongs to the GcvH family. As to quaternary structure, the glycine cleavage system is composed of four proteins: P, T, L and H. The cofactor is (R)-lipoate.

The glycine cleavage system catalyzes the degradation of glycine. The H protein shuttles the methylamine group of glycine from the P protein to the T protein. This chain is Glycine cleavage system H protein, found in Leptospira interrogans serogroup Icterohaemorrhagiae serovar copenhageni (strain Fiocruz L1-130).